The sequence spans 356 residues: uncharacterized protein (356 aa).

6 consecutive transmembrane segments (helical) span residues 2–22 (IESI…FHRL), 35–55 (GYVT…PIPF), 76–96 (NMGY…FAFG), 99–119 (LLYG…GPFL), 124–144 (IVAL…LSIF), and 152–172 (EIAF…ITFV). A GGDEF domain is found at 218–353 (ESLALLLIDI…GRNQVMFNPI (136 aa)).

The protein localises to the cell membrane. This is an uncharacterized protein from Staphylococcus haemolyticus (strain JCSC1435).